A 1256-amino-acid polypeptide reads, in one-letter code: Muramidase-released protein (1256 aa).

The first 47 residues, 1 to 47, serve as a signal peptide directing secretion; the sequence is MRRSNKKSFDWYGTKQQFSIRKYHFGAASVLLGVSLVLGAGAQVVKA. 2 Small repeats span residues 663 to 681 and 839 to 861; these read KTTGTVVAGTTTVKYVYEK and KTDGEENGKVIEGTITVTYVYQK. 3 disordered regions span residues 873–949, 967–994, and 1028–1049; these read PETD…VDTP, GNPIAPQEEGTKPNKSIPGYEFTGKTVT, and KEPVTDTPTSPEGTPYDTTDNK. The Large repeat unit spans residues 953–1006; it reads VPVKKVVTNHVDEEGNPIAPQEEGTKPNKSIPGYEFTGKTVTDEDGNTTHIYKK. Residues 1033-1045 are compositionally biased toward polar residues; sequence DTPTSPEGTPYDT. One copy of the Small repeat lies at 1064 to 1084; that stretch reads RVDGTENGKVVEGETVVTYVY. 2 Large repeats span residues 1089-1142 and 1143-1195; these read TPAK…IYKK and TPAK…IYRK. A disordered region spans residues 1102-1137; it reads EGNPVAPQEEGTKPNKSIPGYEFTGKTVTDEDGNTT. The disordered stretch occupies residues 1196–1229; the sequence is LSNKPTTPEKETPAKPQAGKTASGKAQLPNTGEA. Positions 1223 to 1227 match the LPXTG sorting signal motif; sequence LPNTG. Position 1226 is a pentaglycyl murein peptidoglycan amidated threonine (Thr-1226). A propeptide spans 1227–1256 (removed by sortase); that stretch reads GEASSVAGALGTAMLVATLAFARKRRRNED.

It localises to the secreted. It is found in the cell wall. The protein is Muramidase-released protein (mrp) of Streptococcus suis.